The sequence spans 376 residues: Growth/differentiation factor 8 (376 aa).

The signal sequence occupies residues 1–24 (MIQKPQMYVYIYLFVLIAAGPVDL). A propeptide spanning residues 25–267 (NEDSEREANV…VTDTPKRSRR (243 aa)) is cleaved from the precursor. N-linked (GlcNAc...) asparagine glycosylation occurs at N72. Cystine bridges form between C273/C283, C282/C341, C310/C373, and C314/C375.

The protein belongs to the TGF-beta family. As to quaternary structure, homodimer; disulfide-linked. Interacts with WFIKKN2, leading to inhibit its activity. Interacts with FSTL3. Post-translationally, synthesized as large precursor molecule that undergoes proteolytic cleavage to generate an N-terminal propeptide and a disulfide linked C-terminal dimer, which is the biologically active molecule. The circulating form consists of a latent complex of the C-terminal dimer and other proteins, including its propeptide, which maintain the C-terminal dimer in a latent, inactive state. Ligand activation requires additional cleavage of the prodomain by a tolloid-like metalloproteinase.

It is found in the secreted. Acts specifically as a negative regulator of skeletal muscle growth. The chain is Growth/differentiation factor 8 (Mstn) from Rattus norvegicus (Rat).